The primary structure comprises 185 residues: MNSLSNLLDNKISVAKIVNSHGVHGEVKIVPFTNVKDVITNLEEVLLYNTSTRNFFFSKVLQVKPLNKFFVLNLRGIKDMDEAKKMIGYEVFIDKKDLPSLNSEEYYWYEILDSEVYYEDGEYVGKVEEIIQTGANDVISIKNLEDDKEVLIPMTDHYIIELKKEDKSIIVKKIEWYENGTNQAD.

The PRC barrel domain occupies 103–177 (SEEYYWYEIL…SIIVKKIEWY (75 aa)).

This sequence belongs to the RimM family. As to quaternary structure, binds ribosomal protein uS19.

It localises to the cytoplasm. In terms of biological role, an accessory protein needed during the final step in the assembly of 30S ribosomal subunit, possibly for assembly of the head region. Essential for efficient processing of 16S rRNA. May be needed both before and after RbfA during the maturation of 16S rRNA. It has affinity for free ribosomal 30S subunits but not for 70S ribosomes. The sequence is that of Ribosome maturation factor RimM from Petrotoga mobilis (strain DSM 10674 / SJ95).